The chain runs to 370 residues: Anhydro-N-acetylmuramic acid kinase (370 aa).

ATP is bound at residue 12-19 (GTSLDGVD).

The protein belongs to the anhydro-N-acetylmuramic acid kinase family.

The catalysed reaction is 1,6-anhydro-N-acetyl-beta-muramate + ATP + H2O = N-acetyl-D-muramate 6-phosphate + ADP + H(+). It functions in the pathway amino-sugar metabolism; 1,6-anhydro-N-acetylmuramate degradation. The protein operates within cell wall biogenesis; peptidoglycan recycling. Functionally, catalyzes the specific phosphorylation of 1,6-anhydro-N-acetylmuramic acid (anhMurNAc) with the simultaneous cleavage of the 1,6-anhydro ring, generating MurNAc-6-P. Is required for the utilization of anhMurNAc either imported from the medium or derived from its own cell wall murein, and thus plays a role in cell wall recycling. This Pectobacterium carotovorum subsp. carotovorum (strain PC1) protein is Anhydro-N-acetylmuramic acid kinase.